The following is a 244-amino-acid chain: rRNA adenine N-6-methyltransferase (244 aa).

Residues Asn-11, Ile-13, Gly-38, Glu-59, Asp-84, and Asn-101 each contribute to the S-adenosyl-L-methionine site.

It belongs to the class I-like SAM-binding methyltransferase superfamily. rRNA adenine N(6)-methyltransferase family.

It catalyses the reaction adenosine(2085) in 23S rRNA + 2 S-adenosyl-L-methionine = N(6)-dimethyladenosine(2085) in 23S rRNA + 2 S-adenosyl-L-homocysteine + 2 H(+). Functionally, this protein produces a dimethylation of the adenine residue at position 2085 in 23S rRNA, resulting in reduced affinity between ribosomes and macrolide-lincosamide-streptogramin B antibiotics. This chain is rRNA adenine N-6-methyltransferase (ermC), found in Staphylococcus aureus.